We begin with the raw amino-acid sequence, 248 residues long: 3-deoxy-manno-octulosonate cytidylyltransferase (248 aa).

Belongs to the KdsB family.

It localises to the cytoplasm. The enzyme catalyses 3-deoxy-alpha-D-manno-oct-2-ulosonate + CTP = CMP-3-deoxy-beta-D-manno-octulosonate + diphosphate. Its pathway is nucleotide-sugar biosynthesis; CMP-3-deoxy-D-manno-octulosonate biosynthesis; CMP-3-deoxy-D-manno-octulosonate from 3-deoxy-D-manno-octulosonate and CTP: step 1/1. It functions in the pathway bacterial outer membrane biogenesis; lipopolysaccharide biosynthesis. In terms of biological role, activates KDO (a required 8-carbon sugar) for incorporation into bacterial lipopolysaccharide in Gram-negative bacteria. The chain is 3-deoxy-manno-octulosonate cytidylyltransferase from Citrobacter koseri (strain ATCC BAA-895 / CDC 4225-83 / SGSC4696).